Here is a 317-residue protein sequence, read N- to C-terminus: Methionyl-tRNA formyltransferase (317 aa).

113 to 116 (SLLP) is a binding site for (6S)-5,6,7,8-tetrahydrofolate.

The protein belongs to the Fmt family.

The enzyme catalyses L-methionyl-tRNA(fMet) + (6R)-10-formyltetrahydrofolate = N-formyl-L-methionyl-tRNA(fMet) + (6S)-5,6,7,8-tetrahydrofolate + H(+). Functionally, attaches a formyl group to the free amino group of methionyl-tRNA(fMet). The formyl group appears to play a dual role in the initiator identity of N-formylmethionyl-tRNA by promoting its recognition by IF2 and preventing the misappropriation of this tRNA by the elongation apparatus. This Pseudomonas fluorescens (strain SBW25) protein is Methionyl-tRNA formyltransferase.